The primary structure comprises 274 residues: Nitrogenase iron protein (274 aa).

8-15 is a binding site for ATP; it reads GKGGIGKS. [4Fe-4S] cluster is bound at residue cysteine 94. ADP-ribosylarginine; by dinitrogenase reductase ADP-ribosyltransferase is present on arginine 97. Cysteine 131 is a binding site for [4Fe-4S] cluster.

Belongs to the NifH/BchL/ChlL family. Homodimer. It depends on [4Fe-4S] cluster as a cofactor. Post-translationally, the reversible ADP-ribosylation of Arg-97 inactivates the nitrogenase reductase and regulates nitrogenase activity.

The enzyme catalyses N2 + 8 reduced [2Fe-2S]-[ferredoxin] + 16 ATP + 16 H2O = H2 + 8 oxidized [2Fe-2S]-[ferredoxin] + 2 NH4(+) + 16 ADP + 16 phosphate + 6 H(+). In terms of biological role, the key enzymatic reactions in nitrogen fixation are catalyzed by the nitrogenase complex, which has 2 components: the iron protein and the molybdenum-iron protein. This is Nitrogenase iron protein from Azobacteroides pseudotrichonymphae genomovar. CFP2.